We begin with the raw amino-acid sequence, 222 residues long: ATP-dependent dethiobiotin synthetase BioD (222 aa).

Position 12-17 (12-17 (DAGKTV)) interacts with ATP. T16 is a Mg(2+) binding site. The active site involves K37. S41 contacts substrate. Residues D54, 116 to 119 (EGAG), 176 to 177 (VQ), 206 to 208 (PYL), and E213 contribute to the ATP site. 2 residues coordinate Mg(2+): D54 and E116.

The protein belongs to the dethiobiotin synthetase family. Homodimer. Requires Mg(2+) as cofactor.

It localises to the cytoplasm. The enzyme catalyses (7R,8S)-7,8-diammoniononanoate + CO2 + ATP = (4R,5S)-dethiobiotin + ADP + phosphate + 3 H(+). Its pathway is cofactor biosynthesis; biotin biosynthesis; biotin from 7,8-diaminononanoate: step 1/2. Functionally, catalyzes a mechanistically unusual reaction, the ATP-dependent insertion of CO2 between the N7 and N8 nitrogen atoms of 7,8-diaminopelargonic acid (DAPA, also called 7,8-diammoniononanoate) to form a ureido ring. The chain is ATP-dependent dethiobiotin synthetase BioD from Idiomarina loihiensis (strain ATCC BAA-735 / DSM 15497 / L2-TR).